A 735-amino-acid chain; its full sequence is Transmembrane channel-like protein 7 (735 aa).

The Extracellular segment spans residues 1–164 (MSEFGAGAEL…QSYFSFLRFL (164 aa)). Residues 165–185 (VLLNFLMFILMFSFVTLPAVI) traverse the membrane as a helical segment. Over 186 to 233 (SNYGIFNSSSTKISPNNTEPYCTVYTPSGNKGLVYFYTYLKDLLTGTG) the chain is Cytoplasmic. Residues 234 to 254 (FLEVTVLFYGYYTIDAAWFSV) traverse the membrane as a helical segment. At 255-258 (LRYN) the chain is on the extracellular side. A helical membrane pass occupies residues 259 to 279 (LPLAYLLTTFAYLALSFVWII). The Cytoplasmic portion of the chain corresponds to 280-355 (KRSVERFRQH…TMKEKLQIYS (76 aa)). The chain crosses the membrane as a helical span at residues 356–376 (LRIFINIIVIAVLSGCFYSIY). Topologically, residues 377-403 (RATVFSQENSSVSIRRNVMIANLLVQY) are extracellular. An N-linked (GlcNAc...) asparagine glycan is attached at N385. The helical transmembrane segment at 404 to 424 (LPSIVITSANFIAPQIFSFLI) threads the bilayer. Residues 425–436 (RFEDYSAAFEIR) are Cytoplasmic-facing. The helical transmembrane segment at 437-457 (LTLIRCVFVRLANVGVLLFSL) threads the bilayer. Over 458–488 (WSQIHCDNDQCKACGYDYELYPCWESAVGQE) the chain is Extracellular. Residues 489 to 509 (MYKLLIFDFMIIIAMTLFVDF) traverse the membrane as a helical segment. The Cytoplasmic segment spans residues 510–548 (PRKLLVTYCSWKLVQWWGLQEFGISDNVLEIIYGQTICW). The chain crosses the membrane as a helical span at residues 549–569 (IGTFFSPLLPAIATIKYFIIF). Residues 570–594 (YIKKISLIHTRKPASRPIRASSSNF) are Extracellular-facing. Residues 595-615 (FFLAVLLIGLILAFVPLGVSI) traverse the membrane as a helical segment. Residues 616-634 (ALISSSKACGPFRNFNTSW) lie on the Cytoplasmic side of the membrane. A helical membrane pass occupies residues 635 to 655 (AIVPYTILEFPIGLQKFLYGI). At 656-658 (ASE) the chain is on the extracellular side. Residues 659-679 (AFAVPFFVIACLFMFYFIALA) traverse the membrane as a helical segment. Residues 680–735 (GAHKRVVEQLREQLVTESRDKLFLLEKLSEAQKNSGKPQKARKLTSSWLLEPLDKG) lie on the Cytoplasmic side of the membrane. Residues 710-735 (AQKNSGKPQKARKLTSSWLLEPLDKG) form a disordered region.

This sequence belongs to the TMC family.

Its subcellular location is the membrane. In terms of biological role, probable component of an ion channel. The chain is Transmembrane channel-like protein 7 (Tmc7) from Gallus gallus (Chicken).